Reading from the N-terminus, the 592-residue chain is Catabolite repression protein creC (592 aa).

The interval 119–140 (NSALAAAPVKDPSKKRKPKNNI) is disordered. WD repeat units lie at residues 248 to 288 (INSS…ALFI), 327 to 368 (LANQ…DVFR), 369 to 408 (SYYG…IIAR), and 411 to 455 (GHDS…LHRP). Disordered regions lie at residues 459-513 (HQTS…HPVE) and 556-592 (WDRP…MGSL). 2 stretches are compositionally biased toward polar residues: residues 484 to 499 (SSGN…TAAD) and 564 to 576 (SDNY…SETL). Residues 529-566 (VGEDPICWLGFQEDTIMTSSLEGHIRTWDRPRENISDN) form a WD 5 repeat.

This sequence belongs to the WD repeat creC family. In terms of assembly, interacts with creB.

Its function is as follows. Component of the regulatory network controlling carbon source utilization through ubiquitination and deubiquitination involving creA, creB, creC, creD and acrB. Required to prevent the proteolysis of the CreB deubiquitinating enzyme in the absence of carbon catabolite repression. CreB deubiquitinating enzyme stabilized in a complex with the CreC leads to the expression of genes such as those in the proline and quinate pathways. In Emericella nidulans (strain FGSC A4 / ATCC 38163 / CBS 112.46 / NRRL 194 / M139) (Aspergillus nidulans), this protein is Catabolite repression protein creC (creC).